Consider the following 316-residue polypeptide: Protein prune homolog 2 (316 aa).

Residues Met1–Ser24 form a disordered region. Positions Ile128–Arg285 constitute a CRAL-TRIO domain. The segment at Ser287–Asp316 is disordered.

It is found in the cytoplasm. The polypeptide is Protein prune homolog 2 (Prune2) (Xenopus tropicalis (Western clawed frog)).